The chain runs to 54 residues: Sperm protamine P3 (54 aa).

A disordered region spans residues 1–54 (RRRRRRGKGKGGKKKKGKKRRRRGRKGKGKGKKKGKRKGKRGGKRRRRRRKGKK).

Gonads.

It localises to the nucleus. It is found in the chromosome. Its function is as follows. Protamines substitute for histones in the chromatin of sperm during the haploid phase of spermatogenesis. They compact sperm DNA into a highly condensed, stable and inactive complex. The protein is Sperm protamine P3 of Bolinus brandaris (Purple dye murex).